The sequence spans 96 residues: MRPYEIMVILDPTLDERTVAPSLETFLNVVRKDGGSVEKVDIWGRRRLAYEIAKHAEGIYVVIDLKAEPATVSELDRQLSLNESVLRTKVMRTDKH.

This sequence belongs to the bacterial ribosomal protein bS6 family.

Functionally, binds together with bS18 to 16S ribosomal RNA. The protein is Small ribosomal subunit protein bS6 of Mycolicibacterium paratuberculosis (strain ATCC BAA-968 / K-10) (Mycobacterium paratuberculosis).